Here is a 234-residue protein sequence, read N- to C-terminus: Segregation and condensation protein A (234 aa).

This sequence belongs to the ScpA family. Component of a cohesin-like complex composed of ScpA, ScpB and the Smc homodimer, in which ScpA and ScpB bind to the head domain of Smc. The presence of the three proteins is required for the association of the complex with DNA.

The protein localises to the cytoplasm. In terms of biological role, participates in chromosomal partition during cell division. May act via the formation of a condensin-like complex containing Smc and ScpB that pull DNA away from mid-cell into both cell halves. The protein is Segregation and condensation protein A of Streptococcus pyogenes serotype M5 (strain Manfredo).